We begin with the raw amino-acid sequence, 425 residues long: Enolase (425 aa).

Gln-162 lines the (2R)-2-phosphoglycerate pocket. The active-site Proton donor is Glu-204. Asp-241, Glu-288, and Asp-315 together coordinate Mg(2+). Lys-340, Arg-369, Ser-370, and Lys-391 together coordinate (2R)-2-phosphoglycerate. Catalysis depends on Lys-340, which acts as the Proton acceptor.

Belongs to the enolase family. Mg(2+) is required as a cofactor.

The protein localises to the cytoplasm. It is found in the secreted. Its subcellular location is the cell surface. It catalyses the reaction (2R)-2-phosphoglycerate = phosphoenolpyruvate + H2O. Its pathway is carbohydrate degradation; glycolysis; pyruvate from D-glyceraldehyde 3-phosphate: step 4/5. In terms of biological role, catalyzes the reversible conversion of 2-phosphoglycerate (2-PG) into phosphoenolpyruvate (PEP). It is essential for the degradation of carbohydrates via glycolysis. The protein is Enolase of Porphyromonas gingivalis (strain ATCC 33277 / DSM 20709 / CIP 103683 / JCM 12257 / NCTC 11834 / 2561).